A 501-amino-acid chain; its full sequence is ATP synthase subunit alpha (501 aa).

Residue 169-176 (GDRQTGKT) coordinates ATP.

This sequence belongs to the ATPase alpha/beta chains family. In terms of assembly, F-type ATPases have 2 components, CF(1) - the catalytic core - and CF(0) - the membrane proton channel. CF(1) has five subunits: alpha(3), beta(3), gamma(1), delta(1), epsilon(1). CF(0) has three main subunits: a(1), b(2) and c(9-12). The alpha and beta chains form an alternating ring which encloses part of the gamma chain. CF(1) is attached to CF(0) by a central stalk formed by the gamma and epsilon chains, while a peripheral stalk is formed by the delta and b chains.

It is found in the cell membrane. The catalysed reaction is ATP + H2O + 4 H(+)(in) = ADP + phosphate + 5 H(+)(out). Its function is as follows. Produces ATP from ADP in the presence of a proton gradient across the membrane. The alpha chain is a regulatory subunit. The protein is ATP synthase subunit alpha of Streptococcus gordonii (strain Challis / ATCC 35105 / BCRC 15272 / CH1 / DL1 / V288).